The primary structure comprises 845 residues: SLIT and NTRK-like protein 2 (845 aa).

Residues 1–21 (MLSGVWFLSVLTVAGILQTES) form the signal peptide. The Extracellular portion of the chain corresponds to 22–621 (RKTAKDICKI…LHTEVPLSVL (600 aa)). 2 disulfides stabilise this stretch: cysteine 29-cysteine 35 and cysteine 33-cysteine 46. LRR repeat units lie at residues 63–84 (RIYQ…EFVN), 87–108 (NAVT…AFSG), 111–132 (TLKR…TFLG), 135–156 (SLEY…AFSK), 159–180 (KLKV…VFRF), and 182–203 (LLTH…GVLE). Asparagine 84 is a glycosylation site (N-linked (GlcNAc...) asparagine). Residues 167-215 (DNLLLSLPSNVFRFVLLTHLDLRGNRLKVMPFAGVLEHIGGIMEIQLEE) are required for interaction with PTPRD. An LRRCT 1 domain is found at 216-265 (NPWNCTCDLLPLKAWLDTITVFVGEIVCETPFRLHGKDVTQLTRQDLCPR). 2 cysteine pairs are disulfide-bonded: cysteine 220–cysteine 243 and cysteine 222–cysteine 263. Residues 263–321 (CPRKSASDSSQRGSHADTHVQRLSPTMNPALNPTRAPKASRPPKMRNRPTPRVTVSKDR) are disordered. Residues 283–293 (QRLSPTMNPAL) show a composition bias toward polar residues. The LRRNT domain occupies 331–373 (QTKSPVPLTCPSSCVCTSQSSDNGLNVNCQERKFTNISDLQPK). 6 LRR repeats span residues 376-397 (SPKK…DLLE), 400-421 (SLDL…AFTN), 424-445 (SLRR…MFDG), 448-469 (SLQY…TFDA), 472-493 (NLQL…IFGG), and 495-516 (ALTR…GVLD). A glycan (N-linked (GlcNAc...) asparagine) is linked at asparagine 421. The LRRCT 2 domain maps to 529-580 (NPWDCTCDIMGLKDWTEHANSPVIINEVTCESPAKHAGEILKFLGREAICPD). The chain crosses the membrane as a helical span at residues 622 to 642 (ILGLLVVFILSVCFGAGLFVF). Over 643–845 (VLKRRKGVPS…LEKQTAISQL (203 aa)) the chain is Cytoplasmic. The residue at position 756 (tyrosine 756) is a Phosphotyrosine.

This sequence belongs to the SLITRK family. As to quaternary structure, interacts with PTPRD; this interaction is PTPRD splicing-dependent and may induce pre-synaptic differentiation. Interacts with NTRK2. In terms of tissue distribution, expressed predominantly in the cerebral cortex of the brain but also at low levels in the spinal cord and medulla. Also expressed in some astrocytic brain tumors such as astrocytomas, oligodendrogliomas, glioblastomas, gangliogliomas and primitive neuroectodermal tumors.

The protein localises to the membrane. Its subcellular location is the cell membrane. It localises to the cell projection. It is found in the dendrite. Its function is as follows. It is involved in synaptogenesis and promotes excitatory synapse differentiation. Suppresses neurite outgrowth. Involved in the negative regulation of NTRK2. The chain is SLIT and NTRK-like protein 2 (SLITRK2) from Homo sapiens (Human).